Here is a 212-residue protein sequence, read N- to C-terminus: ATP-dependent dethiobiotin synthetase BioD (212 aa).

12-17 (DCGKTF) contributes to the ATP binding site. Thr-16 contacts Mg(2+). Lys-33 is a catalytic residue. Residue Ser-37 participates in substrate binding. ATP is bound by residues Asp-50, 110 to 113 (EGAG), and 170 to 171 (NC). The Mg(2+) site is built by Asp-50 and Glu-110.

Belongs to the dethiobiotin synthetase family. As to quaternary structure, homodimer. The cofactor is Mg(2+).

Its subcellular location is the cytoplasm. The enzyme catalyses (7R,8S)-7,8-diammoniononanoate + CO2 + ATP = (4R,5S)-dethiobiotin + ADP + phosphate + 3 H(+). It participates in cofactor biosynthesis; biotin biosynthesis; biotin from 7,8-diaminononanoate: step 1/2. In terms of biological role, catalyzes a mechanistically unusual reaction, the ATP-dependent insertion of CO2 between the N7 and N8 nitrogen atoms of 7,8-diaminopelargonic acid (DAPA, also called 7,8-diammoniononanoate) to form a ureido ring. The sequence is that of ATP-dependent dethiobiotin synthetase BioD from Legionella pneumophila (strain Corby).